The chain runs to 89 residues: MGLKEEFEEHAEKVKTLPAAPSNDDMLILYGLYKQATVGPVNTSRPGMFNMREKYKWDAWKAVEGKSKEEAMGDYITKVKQLFEAAGSS.

The region spanning 3–88 is the ACB domain; that stretch reads LKEEFEEHAE…VKQLFEAAGS (86 aa). An acyl-CoA is bound by residues 30–34, Lys-56, and Tyr-75; that span reads YGLYK.

Belongs to the ACBP family.

Its function is as follows. Binds medium- and long-chain acyl-CoA esters with very high affinity and may function as an intracellular carrier of acyl-CoA esters. In Gossypium hirsutum (Upland cotton), this protein is Acyl-CoA-binding protein.